Consider the following 212-residue polypeptide: Actin-depolymerizing factor 1, isoforms a/b (212 aa).

In terms of domain architecture, ADF-H spans 3–159 (SGVMVDPDVQ…SHKELLNNCP (157 aa)).

This sequence belongs to the actin-binding proteins ADF family. Interacts with F-actin.

Its function is as follows. Depolymerizes growing actin filaments in muscle cells; required for the assembly of actin filaments into the functional contractile myofilament lattice of muscle. Competes with unc-87 for actin binding and inhibits the actin-bundling activity of unc-87. In Caenorhabditis elegans, this protein is Actin-depolymerizing factor 1, isoforms a/b.